Reading from the N-terminus, the 581-residue chain is Probable bifunctional SAT/APS kinase 2 (581 aa).

The tract at residues 1–200 is adenylsulfate kinase; it reads MSGFVVWFTG…AAGGARGLIA (200 aa). Residue 10 to 17 coordinates ATP; sequence GLSGAGKS. Residue Ser84 is the Phosphoserine intermediate of the active site. Residues 201 to 581 form a sulfate adenylyltransferase region; the sequence is PHGGELVNRW…ILIESMRSSS (381 aa).

It in the N-terminal section; belongs to the APS kinase family. This sequence in the C-terminal section; belongs to the sulfate adenylyltransferase family.

The enzyme catalyses sulfate + ATP + H(+) = adenosine 5'-phosphosulfate + diphosphate. The catalysed reaction is adenosine 5'-phosphosulfate + ATP = 3'-phosphoadenylyl sulfate + ADP + H(+). It functions in the pathway sulfur metabolism; hydrogen sulfide biosynthesis; sulfite from sulfate: step 1/3. The protein operates within sulfur metabolism; hydrogen sulfide biosynthesis; sulfite from sulfate: step 2/3. In Sorangium cellulosum (strain So ce56) (Polyangium cellulosum (strain So ce56)), this protein is Probable bifunctional SAT/APS kinase 2 (sat2/cysC2).